The following is a 132-amino-acid chain: Small ribosomal subunit protein uS8c (132 aa).

Belongs to the universal ribosomal protein uS8 family. As to quaternary structure, part of the 30S ribosomal subunit.

It localises to the plastid. It is found in the chloroplast. One of the primary rRNA binding proteins, it binds directly to 16S rRNA central domain where it helps coordinate assembly of the platform of the 30S subunit. The sequence is that of Small ribosomal subunit protein uS8c (rps8) from Psilotum nudum (Whisk fern).